The chain runs to 427 residues: BRO1 domain-containing protein BROX homolog (427 aa).

Residues M1–A427 enclose the BRO1 domain.

Belongs to the BROX family.

The protein is BRO1 domain-containing protein BROX homolog of Caenorhabditis elegans.